The chain runs to 516 residues: Extracellular endo-inulinase inu2 (516 aa).

The N-terminal stretch at 1–23 (MLNPKVAYMVWMTCLGLTLPSQA) is a signal peptide. Substrate contacts are provided by residues 41 to 43 (MNE) and Asn61. The active site involves Glu43. Residues Asn108 and Asn109 are each glycosylated (N-linked (GlcNAc...) asparagine). Residue Asp176 participates in substrate binding. Asn210 is a glycosylation site (N-linked (GlcNAc...) asparagine). Position 320 (Asn320) interacts with substrate. The N-linked (GlcNAc...) asparagine glycan is linked to Asn372.

Belongs to the glycosyl hydrolase 32 family.

The protein localises to the secreted. The enzyme catalyses Endohydrolysis of (2-&gt;1)-beta-D-fructosidic linkages in inulin.. In terms of biological role, endo-inulinase involved in utilization of the plant storage polymer inulin, consisting of fructooligosaccharides with a degree of polymerization (DP) value from 2 to 60. This is Extracellular endo-inulinase inu2 (inu2) from Aspergillus ficuum.